The primary structure comprises 278 residues: Protein MGF 505-3R (278 aa).

Belongs to the asfivirus MGF 505 family.

Functionally, plays a role in virus cell tropism, and may be required for efficient virus replication in macrophages. This African swine fever virus (isolate Tick/Malawi/Lil 20-1/1983) (ASFV) protein is Protein MGF 505-3R.